Here is a 96-residue protein sequence, read N- to C-terminus: uncharacterized protein (96 aa).

The CBS domain maps to 57–96 (MTKKVRTTKKDASISDAAALMDKHNVNRLPVVDENNKLVL).

This is an uncharacterized protein from Methanobacterium ivanovii.